The sequence spans 256 residues: E3 ubiquitin-protein ligase MIR2 (256 aa).

At 1–83 (MASKDVEEGV…NLWPEMERQE (83 aa)) the chain is on the cytoplasmic side. An RING-CH-type zinc finger spans residues 7–66 (EEGVEGPICWICREEVGNEGIHPCACTGELDVVHPQCLSTWLTVSRNTACQMCRVIYRTR). Residues C15, C18, C30, C32, H40, C43, C56, and C59 each coordinate Zn(2+). The chain crosses the membrane as a helical span at residues 84–104 (IFELFLLMSVVVAGLVGVALC). At 105–124 (TWTLLVILTAPAGTFSPGAV) the chain is on the extracellular side. Residues 125-145 (LGFLCFFGFYQIFIVFAFGGI) form a helical membrane-spanning segment. The Cytoplasmic segment spans residues 146 to 256 (CRVSGTVRAL…VRKNHPKNNG (111 aa)). The interval 179-256 (DNIELTVLVG…VRKNHPKNNG (78 aa)) is disordered. Residues 193-203 (TDEEPTDESSE) are compositionally biased toward acidic residues. Residues 245 to 256 (KPVRKNHPKNNG) are compositionally biased toward basic residues.

Binds human MHC-I, CD86, ICAM1 and CD1D.

Its subcellular location is the host cell membrane. It localises to the host endoplasmic reticulum. It carries out the reaction S-ubiquitinyl-[E2 ubiquitin-conjugating enzyme]-L-cysteine + [acceptor protein]-L-lysine = [E2 ubiquitin-conjugating enzyme]-L-cysteine + N(6)-ubiquitinyl-[acceptor protein]-L-lysine.. It functions in the pathway protein modification; protein ubiquitination. In terms of biological role, membrane-bound E3 ubiquitin ligase expressed at the immediate early stage of viral reactivation to mediate polyubiquitination of various host membrane proteins related to the immune response. Promotes ubiquitination and subsequent degradation of host MHC-I, CD86, DC-SIGN and DC-SIGNR, ICAM1 and CD1D molecules, presumably to prevent lysis of infected cells by cytotoxic T-lymphocytes and NK cell. Plays a role in the down-regulation of the host stress-induced NKG2D ligands MICA, MICB and CLEC2B, which enable immune cells expressing the NKG2D receptor to recognize and annihilate infected cells prior to viral spread. Alters monocyte metabolism and proliferation by mediating rapid internalization of cellular growth factor-binding receptor tyrosine kinases from the surface leading to increased signaling. The protein is E3 ubiquitin-protein ligase MIR2 (K5) of Homo sapiens (Human).